The chain runs to 155 residues: Protein E6 (155 aa).

2 zinc fingers span residues 33–69 (CVYC…CRVC) and 106–142 (CYRC…CLQC).

The protein belongs to the papillomaviridae E6 protein family. In terms of assembly, forms homodimers. Interacts with ubiquitin-protein ligase UBE3A/E6-AP; this interaction stimulates UBE3A ubiquitin activity. Interacts with host TP53 and EP300; this interaction inhibits TP53 activity.

It localises to the host cytoplasm. The protein resides in the host nucleus. In terms of biological role, plays a major role in the induction and maintenance of cellular transformation. E6 associates with host UBE3A/E6-AP ubiquitin-protein ligase and modulates its activity. Sequesters tumor suppressor TP53 in the host cytoplasm and modulates its activity by interacting with host EP300 that results in the reduction of TP53 acetylation and activation. In turn, apoptosis induced by DNA damage is inhibited. E6 also protects host keratinocytes from apoptosis by mediating the degradation of host BAK1. May also inhibit host immune response. This Homo sapiens (Human) protein is Protein E6.